Reading from the N-terminus, the 78-residue chain is Major outer membrane lipoprotein Lpp (78 aa).

The N-terminal stretch at 1–19 (MKAKIVLGAVILASGLLAG) is a signal peptide. Cysteine 20 carries N-palmitoyl cysteine lipidation. Cysteine 20 is lipidated: S-diacylglycerol cysteine. 2 repeats span residues 25–35 (NAQLDQISSDV) and 39–49 (NTQVQQLSSDV). Residues 28–62 (LDQISSDVNRLNTQVQQLSSDVQSANAQAKAAYEA) are a coiled coil. At lysine 78 the chain carries N6-murein peptidoglycan lysine.

Belongs to the Lpp family. As to quaternary structure, homotrimer.

It is found in the cell outer membrane. Its subcellular location is the secreted. It localises to the cell wall. In terms of biological role, a highly abundant outer membrane lipoprotein that controls the distance between the inner and outer membranes. The only protein known to be covalently linked to the peptidoglycan network (PGN). Also non-covalently binds the PGN. The link between the cell outer membrane and PGN contributes to maintenance of the structural and functional integrity of the cell envelope, and maintains the correct distance between the PGN and the outer membrane. The sequence is that of Major outer membrane lipoprotein Lpp from Proteus mirabilis.